Here is a 319-residue protein sequence, read N- to C-terminus: Coproporphyrin III ferrochelatase 2 (319 aa).

Fe-coproporphyrin III contacts are provided by residues Tyr-13, Arg-30, 46–47 (RY), Ser-54, and Tyr-125. Positions 181 and 262 each coordinate Fe(2+).

This sequence belongs to the ferrochelatase family.

It localises to the cytoplasm. It catalyses the reaction Fe-coproporphyrin III + 2 H(+) = coproporphyrin III + Fe(2+). It participates in porphyrin-containing compound metabolism; protoheme biosynthesis. In terms of biological role, involved in coproporphyrin-dependent heme b biosynthesis. Catalyzes the insertion of ferrous iron into coproporphyrin III to form Fe-coproporphyrin III. This is Coproporphyrin III ferrochelatase 2 from Bacillus anthracis.